We begin with the raw amino-acid sequence, 849 residues long: Putative endoplasmic reticulum mannosidase MNL2 (849 aa).

Residues 1-12 (MSIARLVYSLFR) are Cytoplasmic-facing. The helical; Signal-anchor for type II membrane protein transmembrane segment at 13-32 (RVRSVLLLFITISLLFYYTF) threads the bilayer. Topologically, residues 33-849 (QNEIDILNSY…TQGGHIIKKK (817 aa)) are lumenal. An N-linked (GlcNAc...) asparagine glycan is attached at N45. The interval 56-79 (HNTEGSSKLDPPDLSSTGSDRIAT) is disordered. Residues C559 and C598 are joined by a disulfide bond.

The protein belongs to the glycosyl hydrolase 47 family. The cofactor is Ca(2+).

Its subcellular location is the endoplasmic reticulum membrane. Its pathway is protein modification; protein glycosylation. In terms of biological role, putative mannosidase involved in glycoprotein quality control since it is involved in the targeting of misfolded glycoproteins for ER-associated protein degradation (ERAD). In Saccharomyces cerevisiae (strain ATCC 204508 / S288c) (Baker's yeast), this protein is Putative endoplasmic reticulum mannosidase MNL2 (MNL2).